We begin with the raw amino-acid sequence, 740 residues long: ATP-dependent RNA helicase DDX1 (740 aa).

The segment at 1-448 (MAAFSEMGVM…ETVHHVVVPV (448 aa)) is interaction with dsRNA. Residues 2 to 428 (AAFSEMGVMP…SEKIMHFPTW (427 aa)) form the Helicase ATP-binding domain. 46–53 (AETGSGKT) is an ATP binding site. The B30.2/SPRY domain maps to 70–247 (DQQEGKKGKA…LKFNFGEEDF (178 aa)). Residues 370–373 (DEAD) carry the DEAD box motif. Residues 493 to 681 (KGEYIVRAIK…QVEPDIKVPL (189 aa)) form the Helicase C-terminal domain.

Belongs to the DEAD box helicase family. DDX1 subfamily.

The protein localises to the nucleus. The protein resides in the cytoplasm. It is found in the cytoplasmic granule. It localises to the cytosol. Its subcellular location is the mitochondrion. The catalysed reaction is ATP + H2O = ADP + phosphate + H(+). In terms of biological role, acts as an ATP-dependent RNA helicase, able to unwind both RNA-RNA and RNA-DNA duplexes. Possesses 5' single-stranded RNA overhang nuclease activity. Acts as a positive regulator of transcription. May be involved in 3'-end cleavage and polyadenylation of pre-mRNAs. Binds DNA and RNA. Component of the tRNA-splicing ligase complex required to facilitate the enzymatic turnover of catalytic subunit rtcb. Binds (via helicase ATP-binding domain) on both short and long poly(I:C) dsRNA. The chain is ATP-dependent RNA helicase DDX1 (ddx1) from Xenopus laevis (African clawed frog).